Consider the following 347-residue polypeptide: Succinylglutamate desuccinylase (347 aa).

Zn(2+) is bound by residues His64, Glu67, and His159. The active site involves Glu222.

This sequence belongs to the AspA/AstE family. Succinylglutamate desuccinylase subfamily. Zn(2+) is required as a cofactor.

It catalyses the reaction N-succinyl-L-glutamate + H2O = L-glutamate + succinate. It participates in amino-acid degradation; L-arginine degradation via AST pathway; L-glutamate and succinate from L-arginine: step 5/5. Its function is as follows. Transforms N(2)-succinylglutamate into succinate and glutamate. This chain is Succinylglutamate desuccinylase, found in Burkholderia cenocepacia (strain ATCC BAA-245 / DSM 16553 / LMG 16656 / NCTC 13227 / J2315 / CF5610) (Burkholderia cepacia (strain J2315)).